A 739-amino-acid chain; its full sequence is NAD(P)H-quinone oxidoreductase subunit 5, chloroplastic (739 aa).

16 consecutive transmembrane segments (helical) span residues 9 to 29, 39 to 59, 89 to 109, 125 to 145, 147 to 167, 185 to 205, 219 to 239, 258 to 278, 280 to 300, 327 to 347, 354 to 374, 396 to 416, 425 to 445, 542 to 562, 610 to 630, and 719 to 739; these read WVIP…LILI, IWAF…VQLS, IDPL…LVLI, FVYI…SNLI, IYFF…FWFT, GDFG…SLEF, NGVN…GAVA, TPIS…FLLA, LLPL…VGTI, LGYM…FHLI, ALLF…VGYS, TTFL…CFWS, WLYS…TAFY, LFPL…GISF, TLAI…YSFF, and ISSY…FFLS.

The protein belongs to the complex I subunit 5 family. NDH is composed of at least 16 different subunits, 5 of which are encoded in the nucleus.

It localises to the plastid. The protein resides in the chloroplast thylakoid membrane. The enzyme catalyses a plastoquinone + NADH + (n+1) H(+)(in) = a plastoquinol + NAD(+) + n H(+)(out). It catalyses the reaction a plastoquinone + NADPH + (n+1) H(+)(in) = a plastoquinol + NADP(+) + n H(+)(out). Its function is as follows. NDH shuttles electrons from NAD(P)H:plastoquinone, via FMN and iron-sulfur (Fe-S) centers, to quinones in the photosynthetic chain and possibly in a chloroplast respiratory chain. The immediate electron acceptor for the enzyme in this species is believed to be plastoquinone. Couples the redox reaction to proton translocation, and thus conserves the redox energy in a proton gradient. This Triticum aestivum (Wheat) protein is NAD(P)H-quinone oxidoreductase subunit 5, chloroplastic (ndhF).